The primary structure comprises 304 residues: Quorum-quenching protein AidA (304 aa).

It belongs to the AB hydrolase superfamily.

Involved in quorum quenching (QQ). Inhibits motility and biofilm formation. Could contribute in bacterial competition, as it is capable of hydrolyzing the signaling molecules that mediate interspecies communication. The protein is Quorum-quenching protein AidA of Acinetobacter baumannii (strain MDR-ZJ06).